The following is a 751-amino-acid chain: Catalase-peroxidase (751 aa).

An N-terminal signal peptide occupies residues 1 to 12 (MSNETKCPFSHA). The tryptophyl-tyrosyl-methioninium (Trp-Tyr) (with M-267) cross-link spans 91–241 (WHSAGTYRIG…LAAVQMGLIY (151 aa)). His92 acts as the Proton acceptor in catalysis. The tryptophyl-tyrosyl-methioninium (Tyr-Met) (with W-91) cross-link spans 241–267 (YVNPEGPDGNPDPLAAAHDIRESFGRM). His282 lines the heme b pocket.

It belongs to the peroxidase family. Peroxidase/catalase subfamily. As to quaternary structure, homodimer or homotetramer. Heme b is required as a cofactor. In terms of processing, formation of the three residue Trp-Tyr-Met cross-link is important for the catalase, but not the peroxidase activity of the enzyme.

It carries out the reaction H2O2 + AH2 = A + 2 H2O. The enzyme catalyses 2 H2O2 = O2 + 2 H2O. In terms of biological role, bifunctional enzyme with both catalase and broad-spectrum peroxidase activity. This chain is Catalase-peroxidase, found in Cupriavidus necator (strain ATCC 17699 / DSM 428 / KCTC 22496 / NCIMB 10442 / H16 / Stanier 337) (Ralstonia eutropha).